The primary structure comprises 510 residues: NAD(P)H-quinone oxidoreductase subunit 2 B, chloroplastic (510 aa).

13 helical membrane-spanning segments follow: residues 24–44 (LLLFDGSFIFPECILIFGLIL), 57–77 (IPWLYFISSTSLVMSITALLF), 99–119 (IFQFLILLCSTLCIPLSVEYI), 124–144 (MAITEFLLFVLTATLGGMFLC), 149–169 (LITIFVAPECFSLCSYLLSGY), 183–203 (YLLMGGASSSILVHGFSWLYG), 227–247 (PGISIALIFITVGIGFKLSPA), 295–315 (WHLLLEILAILSMILGNLIAI), 323–343 (MLAYSSIGQIGYVIIGIIVGD), 347–367 (GYASMITYMLFYIAMNLGTFA), 395–415 (ALSLALCLLSLGGLPPLAGFF), 418–438 (LHLFWCGWQAGLYFLVSIGLL), and 482–502 (LSMIVCVIASTIPGISMNPII).

The protein belongs to the complex I subunit 2 family. As to quaternary structure, NDH is composed of at least 16 different subunits, 5 of which are encoded in the nucleus.

It is found in the plastid. It localises to the chloroplast thylakoid membrane. It carries out the reaction a plastoquinone + NADH + (n+1) H(+)(in) = a plastoquinol + NAD(+) + n H(+)(out). It catalyses the reaction a plastoquinone + NADPH + (n+1) H(+)(in) = a plastoquinol + NADP(+) + n H(+)(out). In terms of biological role, NDH shuttles electrons from NAD(P)H:plastoquinone, via FMN and iron-sulfur (Fe-S) centers, to quinones in the photosynthetic chain and possibly in a chloroplast respiratory chain. The immediate electron acceptor for the enzyme in this species is believed to be plastoquinone. Couples the redox reaction to proton translocation, and thus conserves the redox energy in a proton gradient. The sequence is that of NAD(P)H-quinone oxidoreductase subunit 2 B, chloroplastic from Cucumis sativus (Cucumber).